A 303-amino-acid chain; its full sequence is UDP-3-O-acyl-N-acetylglucosamine deacetylase (303 aa).

Residues His78, His237, and Asp241 each contribute to the Zn(2+) site. The Proton donor role is filled by His264.

The protein belongs to the LpxC family. Zn(2+) is required as a cofactor.

The catalysed reaction is a UDP-3-O-[(3R)-3-hydroxyacyl]-N-acetyl-alpha-D-glucosamine + H2O = a UDP-3-O-[(3R)-3-hydroxyacyl]-alpha-D-glucosamine + acetate. It participates in glycolipid biosynthesis; lipid IV(A) biosynthesis; lipid IV(A) from (3R)-3-hydroxytetradecanoyl-[acyl-carrier-protein] and UDP-N-acetyl-alpha-D-glucosamine: step 2/6. Its function is as follows. Catalyzes the hydrolysis of UDP-3-O-myristoyl-N-acetylglucosamine to form UDP-3-O-myristoylglucosamine and acetate, the committed step in lipid A biosynthesis. This is UDP-3-O-acyl-N-acetylglucosamine deacetylase from Pseudomonas paraeruginosa (strain DSM 24068 / PA7) (Pseudomonas aeruginosa (strain PA7)).